We begin with the raw amino-acid sequence, 488 residues long: TOX high mobility group box family member 2 (488 aa).

Positions 76–114 (YEIPPITPPNLPEPSLLHLGDHEASYHSLCHGLTPNGLL) are required for transcriptional activation. 3 disordered regions span residues 192 to 258 (RSSI…PQKP), 293 to 328 (WDSL…KQPM), and 363 to 473 (SLLP…ECGI). Residues 204–216 (GSKSATPSPSSST) are compositionally biased toward low complexity. Basic and acidic residues predominate over residues 222 to 239 (EVHFKISGEKRPSADPGK). Residues 223–252 (VHFKISGEKRPSADPGKKAKNPKKKKKKDP) carry the Nuclear localization signal motif. Basic residues predominate over residues 240–250 (KAKNPKKKKKK). Residues 255-323 (PQKPVSAYAL…QANPPAKMLP (69 aa)) constitute a DNA-binding region (HMG box). The segment covering 302–316 (QSSPDQGETKSTQAN) has biased composition (polar residues). Positions 443–460 (PSSSGSCSPGPSNPTSSG) are enriched in low complexity.

The protein resides in the nucleus. Putative transcriptional activator involved in the hypothalamo-pituitary-gonadal system. This chain is TOX high mobility group box family member 2 (TOX2), found in Homo sapiens (Human).